Here is a 296-residue protein sequence, read N- to C-terminus: 33 kDa chaperonin (296 aa).

Intrachain disulfides connect Cys238–Cys240 and Cys271–Cys274.

The protein belongs to the HSP33 family. Post-translationally, under oxidizing conditions two disulfide bonds are formed involving the reactive cysteines. Under reducing conditions zinc is bound to the reactive cysteines and the protein is inactive.

It is found in the cytoplasm. Its function is as follows. Redox regulated molecular chaperone. Protects both thermally unfolding and oxidatively damaged proteins from irreversible aggregation. Plays an important role in the bacterial defense system toward oxidative stress. The polypeptide is 33 kDa chaperonin (Clostridium botulinum (strain 657 / Type Ba4)).